The following is a 108-amino-acid chain: U3-lycotoxin-Ls1w (108 aa).

The signal sequence occupies residues 1-20 (MKFVLLFGVLLVTLFSYSSA). The propeptide occupies 21–44 (EMLDDFDQADEDELLSLIEKEEAR). 4 disulfides stabilise this stretch: C48–C63, C55–C72, C62–C87, and C74–C85.

This sequence belongs to the neurotoxin 19 (CSTX) family. 01 subfamily. As to expression, expressed by the venom gland.

It localises to the secreted. In Lycosa singoriensis (Wolf spider), this protein is U3-lycotoxin-Ls1w.